Here is an 818-residue protein sequence, read N- to C-terminus: Myosin-A (818 aa).

The residue at position 19 (serine 19) is a Phosphoserine; by PKG. The region spanning 97-771 (MSFGDIGLLN…GAKILTKIQR (675 aa)) is the Myosin motor domain. ATP is bound at residue 191–198 (GESGAGKT). The actin-binding stretch occupies residues 661–671 (PHFIRCIKPNE). Positions 773-818 (KLVEWENCVSVIEAAILKHKYKQKVNKNIPSLLRVQAHIRKKMVAQ) are tail.

The protein belongs to the TRAFAC class myosin-kinesin ATPase superfamily. Myosin family. Component of the glideosome complex composed of GAP50, GAP45, MTIP and MyoA; the complex is formed during the late schizont stage and in merozoites. MyoA, MTIP and GAP45 probably form an initial complex in the cytoplasm which is then recruited to the outer face of the inner membrane complex via the interaction with GAP50. Interacts with ACT1.

It is found in the cell membrane. Its function is as follows. Myosins are actin-based motor molecules with ATPase activity. Unconventional myosins serve in intracellular movements. Their highly divergent tails are presumed to bind to membranous compartments, which would be moved relative to actin filaments. The chain is Myosin-A from Plasmodium falciparum (isolate 3D7).